Here is a 244-residue protein sequence, read N- to C-terminus: Probable transcriptional regulatory protein DNO_1179 (244 aa).

This sequence belongs to the TACO1 family.

The protein localises to the cytoplasm. The sequence is that of Probable transcriptional regulatory protein DNO_1179 from Dichelobacter nodosus (strain VCS1703A).